A 304-amino-acid chain; its full sequence is Acetylglutamate kinase (304 aa).

Substrate-binding positions include 64–65, Arg86, and Asn181; that span reads GG.

It belongs to the acetylglutamate kinase family. ArgB subfamily.

It is found in the plastid. It localises to the chloroplast. It catalyses the reaction N-acetyl-L-glutamate + ATP = N-acetyl-L-glutamyl 5-phosphate + ADP. The protein operates within amino-acid biosynthesis; L-arginine biosynthesis; N(2)-acetyl-L-ornithine from L-glutamate: step 2/4. Catalyzes the ATP-dependent phosphorylation of N-acetyl-L-glutamate. This is Acetylglutamate kinase from Cyanidium caldarium (Red alga).